The chain runs to 482 residues: tRNA sulfurtransferase (482 aa).

One can recognise a THUMP domain in the interval 61 to 165 (LAIRDALTRI…DDRLLLIKGR (105 aa)). ATP-binding positions include 183–184 (LI), Lys265, Gly287, and Gln296. A disulfide bridge links Cys344 with Cys456. The Rhodanese domain occupies 404-482 (FGANDVILDI…GFANVKVYRP (79 aa)). Cys456 serves as the catalytic Cysteine persulfide intermediate.

This sequence belongs to the ThiI family.

The protein resides in the cytoplasm. The catalysed reaction is [ThiI sulfur-carrier protein]-S-sulfanyl-L-cysteine + a uridine in tRNA + 2 reduced [2Fe-2S]-[ferredoxin] + ATP + H(+) = [ThiI sulfur-carrier protein]-L-cysteine + a 4-thiouridine in tRNA + 2 oxidized [2Fe-2S]-[ferredoxin] + AMP + diphosphate. It carries out the reaction [ThiS sulfur-carrier protein]-C-terminal Gly-Gly-AMP + S-sulfanyl-L-cysteinyl-[cysteine desulfurase] + AH2 = [ThiS sulfur-carrier protein]-C-terminal-Gly-aminoethanethioate + L-cysteinyl-[cysteine desulfurase] + A + AMP + 2 H(+). Its pathway is cofactor biosynthesis; thiamine diphosphate biosynthesis. Catalyzes the ATP-dependent transfer of a sulfur to tRNA to produce 4-thiouridine in position 8 of tRNAs, which functions as a near-UV photosensor. Also catalyzes the transfer of sulfur to the sulfur carrier protein ThiS, forming ThiS-thiocarboxylate. This is a step in the synthesis of thiazole, in the thiamine biosynthesis pathway. The sulfur is donated as persulfide by IscS. The protein is tRNA sulfurtransferase of Salmonella agona (strain SL483).